Here is a 235-residue protein sequence, read N- to C-terminus: Adenosine 5'-phosphosulfate reductase (235 aa).

The [4Fe-4S] cluster site is built by Cys-121, Cys-122, Cys-204, and Cys-207. Catalysis depends on Cys-230, which acts as the Nucleophile; cysteine thiosulfonate intermediate.

It belongs to the PAPS reductase family. CysH subfamily. [4Fe-4S] cluster is required as a cofactor.

It localises to the cytoplasm. It carries out the reaction [thioredoxin]-disulfide + sulfite + AMP + 2 H(+) = adenosine 5'-phosphosulfate + [thioredoxin]-dithiol. It functions in the pathway sulfur metabolism; hydrogen sulfide biosynthesis; sulfite from sulfate. In terms of biological role, catalyzes the formation of sulfite from adenosine 5'-phosphosulfate (APS) using thioredoxin as an electron donor. This is Adenosine 5'-phosphosulfate reductase from Anoxybacillus flavithermus (strain DSM 21510 / WK1).